Reading from the N-terminus, the 375-residue chain is Alanine racemase (375 aa).

Catalysis depends on Lys35, which acts as the Proton acceptor; specific for D-alanine. The residue at position 35 (Lys35) is an N6-(pyridoxal phosphate)lysine. Residue Arg130 coordinates substrate. The Proton acceptor; specific for L-alanine role is filled by Tyr253. Met305 contributes to the substrate binding site.

Belongs to the alanine racemase family. It depends on pyridoxal 5'-phosphate as a cofactor.

The enzyme catalyses L-alanine = D-alanine. The protein operates within amino-acid biosynthesis; D-alanine biosynthesis; D-alanine from L-alanine: step 1/1. Catalyzes the interconversion of L-alanine and D-alanine. May also act on other amino acids. The polypeptide is Alanine racemase (alr) (Ralstonia nicotianae (strain ATCC BAA-1114 / GMI1000) (Ralstonia solanacearum)).